We begin with the raw amino-acid sequence, 339 residues long: tRNA dimethylallyltransferase (339 aa).

36-43 (GPTGSGKT) contributes to the ATP binding site. Substrate is bound at residue 38–43 (TGSGKT). The interaction with substrate tRNA stretch occupies residues 61-64 (DSMQ).

The protein belongs to the IPP transferase family. In terms of assembly, monomer. Mg(2+) serves as cofactor.

It carries out the reaction adenosine(37) in tRNA + dimethylallyl diphosphate = N(6)-dimethylallyladenosine(37) in tRNA + diphosphate. Its function is as follows. Catalyzes the transfer of a dimethylallyl group onto the adenine at position 37 in tRNAs that read codons beginning with uridine, leading to the formation of N6-(dimethylallyl)adenosine (i(6)A). This is tRNA dimethylallyltransferase from Chlamydia trachomatis serovar A (strain ATCC VR-571B / DSM 19440 / HAR-13).